Consider the following 73-residue polypeptide: Translation initiation factor IF-1 (73 aa).

One can recognise an S1-like domain in the interval 1–72 (MAKEDAIEVE…NRGRITYRSK (72 aa)).

It belongs to the IF-1 family. Component of the 30S ribosomal translation pre-initiation complex which assembles on the 30S ribosome in the order IF-2 and IF-3, IF-1 and N-formylmethionyl-tRNA(fMet); mRNA recruitment can occur at any time during PIC assembly.

The protein resides in the cytoplasm. In terms of biological role, one of the essential components for the initiation of protein synthesis. Stabilizes the binding of IF-2 and IF-3 on the 30S subunit to which N-formylmethionyl-tRNA(fMet) subsequently binds. Helps modulate mRNA selection, yielding the 30S pre-initiation complex (PIC). Upon addition of the 50S ribosomal subunit IF-1, IF-2 and IF-3 are released leaving the mature 70S translation initiation complex. This is Translation initiation factor IF-1 from Syntrophobacter fumaroxidans (strain DSM 10017 / MPOB).